The following is a 53-amino-acid chain: Sec-independent protein translocase protein TatA (53 aa).

Residues methionine 1 to alanine 21 form a helical membrane-spanning segment.

It belongs to the TatA/E family. The Tat system comprises two distinct complexes: a TatABC complex, containing multiple copies of TatA, TatB and TatC subunits, and a separate TatA complex, containing only TatA subunits. Substrates initially bind to the TatABC complex, which probably triggers association of the separate TatA complex to form the active translocon.

The protein resides in the cell inner membrane. Functionally, part of the twin-arginine translocation (Tat) system that transports large folded proteins containing a characteristic twin-arginine motif in their signal peptide across membranes. TatA could form the protein-conducting channel of the Tat system. In Rickettsia africae (strain ESF-5), this protein is Sec-independent protein translocase protein TatA.